Reading from the N-terminus, the 353-residue chain is Photosystem II D2 protein (353 aa).

An N-acetylthreonine modification is found at Thr-2. The residue at position 2 (Thr-2) is a Phosphothreonine. The chain crosses the membrane as a helical span at residues 41–61 (CAYFAVGGWFTGTTFVTSWYT). Chlorophyll a is bound at residue His-118. A helical transmembrane segment spans residues 125 to 141 (GFMLRQFELARSVQLRP). Residues Gln-130 and Asn-143 each coordinate pheophytin a. Residues 153–166 (VFVSVFLIYPLGQS) form a helical membrane-spanning segment. His-198 provides a ligand contact to chlorophyll a. A helical membrane pass occupies residues 208–228 (AALLCAIHGATVENTLFEDGD). 2 residues coordinate a plastoquinone: His-215 and Phe-262. His-215 lines the Fe cation pocket. His-269 lines the Fe cation pocket. Residues 279-295 (GLWMSALGVVGLALNLR) form a helical membrane-spanning segment.

This sequence belongs to the reaction center PufL/M/PsbA/D family. In terms of assembly, PSII is composed of 1 copy each of membrane proteins PsbA, PsbB, PsbC, PsbD, PsbE, PsbF, PsbH, PsbI, PsbJ, PsbK, PsbL, PsbM, PsbT, PsbX, PsbY, PsbZ, Psb30/Ycf12, at least 3 peripheral proteins of the oxygen-evolving complex and a large number of cofactors. It forms dimeric complexes. The D1/D2 heterodimer binds P680, chlorophylls that are the primary electron donor of PSII, and subsequent electron acceptors. It shares a non-heme iron and each subunit binds pheophytin, quinone, additional chlorophylls, carotenoids and lipids. There is also a Cl(-1) ion associated with D1 and D2, which is required for oxygen evolution. The PSII complex binds additional chlorophylls, carotenoids and specific lipids. is required as a cofactor.

The protein localises to the plastid. The protein resides in the chloroplast thylakoid membrane. It carries out the reaction 2 a plastoquinone + 4 hnu + 2 H2O = 2 a plastoquinol + O2. Photosystem II (PSII) is a light-driven water:plastoquinone oxidoreductase that uses light energy to abstract electrons from H(2)O, generating O(2) and a proton gradient subsequently used for ATP formation. It consists of a core antenna complex that captures photons, and an electron transfer chain that converts photonic excitation into a charge separation. The D1/D2 (PsbA/PsbD) reaction center heterodimer binds P680, the primary electron donor of PSII as well as several subsequent electron acceptors. D2 is needed for assembly of a stable PSII complex. In Lactuca sativa (Garden lettuce), this protein is Photosystem II D2 protein.